Reading from the N-terminus, the 611-residue chain is Dehydrogenase pkfF (611 aa).

A signal peptide spans 1–19 (MRHTALLPLVSSFIVPALA). Residues Asn-28 and Asn-38 are each glycosylated (N-linked (GlcNAc...) asparagine). FAD contacts are provided by residues 50 to 51 (TS), 71 to 72 (EA), and 137 to 140 (HYMV). N-linked (GlcNAc...) asparagine glycans are attached at residues Asn-180, Asn-187, Asn-240, Asn-272, Asn-409, and Asn-471. His-547 functions as the Proton acceptor in the catalytic mechanism. Residues Ala-581 and 592-593 (PQ) each bind FAD.

This sequence belongs to the GMC oxidoreductase family. Requires FAD as cofactor.

It participates in secondary metabolite biosynthesis. In terms of biological role, dehydrogenase; part of the gene cluster that mediates the biosynthesis of aspernidine A, a prenylated isoindolinone. The starting point of the biosynthesis of aspernidin A is the production of orsellinaldehyde by the non-reducing polyketide synthase pkfA. Hydroxylation, methylation of one of the phenol groups, and prenylation, presumably catalyzed by the prenyltransferase pkfE, would be needed to yield aspernidine D. Subsequently, the cytochrome P450 monooxygenase pkfB is responsible for hydroxylation of aspernidine D to yield aspernidine E. The dehydrogenase pkfF may be responsible for further oxidation of aspernidine E to form a dialdehyde intermediate which is further transformed in a series of steps, some of which are enzyme-mediated, to generate aspernidine A. The possibility that additional enzymes outside of the cluster are involved in aspernidine A biosynthesis cannot be excluded. This chain is Dehydrogenase pkfF, found in Emericella nidulans (strain FGSC A4 / ATCC 38163 / CBS 112.46 / NRRL 194 / M139) (Aspergillus nidulans).